We begin with the raw amino-acid sequence, 270 residues long: Urease accessory protein UreD (270 aa).

The protein belongs to the UreD family. In terms of assembly, ureD, UreF and UreG form a complex that acts as a GTP-hydrolysis-dependent molecular chaperone, activating the urease apoprotein by helping to assemble the nickel containing metallocenter of UreC. The UreE protein probably delivers the nickel.

It is found in the cytoplasm. Functionally, required for maturation of urease via the functional incorporation of the urease nickel metallocenter. The polypeptide is Urease accessory protein UreD (Actinobacillus pleuropneumoniae serotype 5b (strain L20)).